A 348-amino-acid chain; its full sequence is Succinoglycan biosynthesis protein ExoO (348 aa).

The segment at 322-348 is disordered; sequence HSAPRAAPVTAAAERSPLGNDPRISKG. A compositionally biased stretch (low complexity) spans 324–334; sequence APRAAPVTAAA.

The protein belongs to the glycosyltransferase 2 family.

The protein resides in the cytoplasm. It functions in the pathway glycan metabolism; exopolysaccharide biosynthesis. Functionally, glycosyltransferase required for the synthesis of succinoglycan (EPS I). Needed for the addition of the fifth sugar (glucose), catalyzes the formation of a beta-1,6 linkage between the fourth and fifth sugar. The protein is Succinoglycan biosynthesis protein ExoO (exoO) of Rhizobium meliloti (strain 1021) (Ensifer meliloti).